We begin with the raw amino-acid sequence, 320 residues long: MALEAVVYPQDPFSYISCKDFPFYDLYFQEEEDQDPQDTKNNIKLGQGQGHGFASNNYNGRTGDYSDDYNYNEEDLQWPRDLPYGSAVDTESQPPPSDVAAGGGRRKRRRTRSSKNKEEIENQRMTHIAVERNRRKQMNEYLAVLRSLMPPYYAQRGDQASIVGGAINYLKELEHHLQSMEPPVKTATEDTGAGHDQTKTTSASSSGPFSDFFAFPQYSNRPTSAAAAEGMAEIEVTMVESHASLKILAKKRPRQLLKLVSSIQSLRLTLLHLNVTTRDDSVLYSISVKVEEGSQLNTVEDIAAAVNQILRRIEEESSFS.

Positions 30-121 (EEEDQDPQDT…RSSKNKEEIE (92 aa)) are disordered. Residues 65 to 76 (YSDDYNYNEEDL) are compositionally biased toward acidic residues. Over residues 104 to 114 (GRRKRRRTRSS) the composition is skewed to basic residues. The 52-residue stretch at 122–173 (NQRMTHIAVERNRRKQMNEYLAVLRSLMPPYYAQRGDQASIVGGAINYLKEL) folds into the bHLH domain. Positions 184 to 206 (VKTATEDTGAGHDQTKTTSASSS) are disordered. The 77-residue stretch at 244-320 (SLKILAKKRP…RRIEEESSFS (77 aa)) folds into the ACT domain.

Homodimer. Expressed constitutively in roots, leaves, stems, and flowers.

Its subcellular location is the nucleus. The sequence is that of Transcription factor bHLH96 (BHLH96) from Arabidopsis thaliana (Mouse-ear cress).